We begin with the raw amino-acid sequence, 429 residues long: Enolase (429 aa).

Position 163 (Gln-163) interacts with (2R)-2-phosphoglycerate. The Proton donor role is filled by Glu-205. Asp-242, Glu-285, and Asp-312 together coordinate Mg(2+). Lys-337, Arg-366, Ser-367, and Lys-388 together coordinate (2R)-2-phosphoglycerate. Lys-337 serves as the catalytic Proton acceptor.

Belongs to the enolase family. It depends on Mg(2+) as a cofactor.

The protein localises to the cytoplasm. It localises to the secreted. Its subcellular location is the cell surface. It catalyses the reaction (2R)-2-phosphoglycerate = phosphoenolpyruvate + H2O. The protein operates within carbohydrate degradation; glycolysis; pyruvate from D-glyceraldehyde 3-phosphate: step 4/5. In terms of biological role, catalyzes the reversible conversion of 2-phosphoglycerate (2-PG) into phosphoenolpyruvate (PEP). It is essential for the degradation of carbohydrates via glycolysis. In Methylorubrum extorquens (strain PA1) (Methylobacterium extorquens), this protein is Enolase.